Here is a 186-residue protein sequence, read N- to C-terminus: Tumor necrosis factor alpha-induced protein 8-like protein 1 (186 aa).

Belongs to the TNFAIP8 family. Interacts with FBXW5; TNFAIP8L1 competes with TSC2 to bind FBXW5 increasing TSC2 stability by preventing its ubiquitination. High expression detected in most carcinoma cell lines, especially in cells transformed with virus genomes.

It is found in the cytoplasm. Its function is as follows. Acts as a negative regulator of mTOR activity. The protein is Tumor necrosis factor alpha-induced protein 8-like protein 1 (TNFAIP8L1) of Homo sapiens (Human).